The sequence spans 443 residues: Proline--tRNA ligase (443 aa).

Belongs to the class-II aminoacyl-tRNA synthetase family. ProS type 2 subfamily. Homodimer.

It localises to the cytoplasm. The catalysed reaction is tRNA(Pro) + L-proline + ATP = L-prolyl-tRNA(Pro) + AMP + diphosphate. Its function is as follows. Catalyzes the attachment of proline to tRNA(Pro) in a two-step reaction: proline is first activated by ATP to form Pro-AMP and then transferred to the acceptor end of tRNA(Pro). In Zymomonas mobilis subsp. mobilis (strain ATCC 31821 / ZM4 / CP4), this protein is Proline--tRNA ligase.